The primary structure comprises 216 residues: Flavin prenyltransferase UbiX (216 aa).

FMN is bound by residues 9 to 11 (GAS), Ser-35, and Arg-144. Residues Tyr-174 and Arg-190 each contribute to the dimethylallyl phosphate site.

The protein belongs to the UbiX/PAD1 family.

The catalysed reaction is dimethylallyl phosphate + FMNH2 = prenylated FMNH2 + phosphate. Flavin prenyltransferase that catalyzes the synthesis of the prenylated FMN cofactor (prenyl-FMN) for 4-hydroxy-3-polyprenylbenzoic acid decarboxylase UbiD. The prenyltransferase is metal-independent and links a dimethylallyl moiety from dimethylallyl monophosphate (DMAP) to the flavin N5 and C6 atoms of FMN. This is Flavin prenyltransferase UbiX from Streptomyces coelicolor (strain ATCC BAA-471 / A3(2) / M145).